The primary structure comprises 96 residues: Small ribosomal subunit protein bS20 (96 aa).

Belongs to the bacterial ribosomal protein bS20 family.

Functionally, binds directly to 16S ribosomal RNA. This Anaplasma marginale (strain St. Maries) protein is Small ribosomal subunit protein bS20.